Reading from the N-terminus, the 453-residue chain is Ribulose bisphosphate carboxylase large chain (453 aa).

Residues 1–2 constitute a propeptide that is removed on maturation; sequence MS. Proline 3 is subject to N-acetylproline. At lysine 14 the chain carries N6,N6,N6-trimethyllysine. Residues asparagine 123 and threonine 173 each coordinate substrate. Lysine 175 serves as the catalytic Proton acceptor. Lysine 177 is a substrate binding site. The Mg(2+) site is built by lysine 201, aspartate 203, and glutamate 204. Lysine 201 is modified (N6-carboxylysine). Histidine 294 functions as the Proton acceptor in the catalytic mechanism. Residues arginine 295, histidine 327, and serine 379 each coordinate substrate.

It belongs to the RuBisCO large chain family. Type I subfamily. As to quaternary structure, heterohexadecamer of 8 large chains and 8 small chains; disulfide-linked. The disulfide link is formed within the large subunit homodimers. The cofactor is Mg(2+). Post-translationally, the disulfide bond which can form in the large chain dimeric partners within the hexadecamer appears to be associated with oxidative stress and protein turnover.

The protein localises to the plastid. It localises to the chloroplast. The enzyme catalyses 2 (2R)-3-phosphoglycerate + 2 H(+) = D-ribulose 1,5-bisphosphate + CO2 + H2O. It carries out the reaction D-ribulose 1,5-bisphosphate + O2 = 2-phosphoglycolate + (2R)-3-phosphoglycerate + 2 H(+). In terms of biological role, ruBisCO catalyzes two reactions: the carboxylation of D-ribulose 1,5-bisphosphate, the primary event in carbon dioxide fixation, as well as the oxidative fragmentation of the pentose substrate in the photorespiration process. Both reactions occur simultaneously and in competition at the same active site. The polypeptide is Ribulose bisphosphate carboxylase large chain (Rubia tinctorum (Madder)).